Reading from the N-terminus, the 309-residue chain is Aspartate carbamoyltransferase catalytic subunit (309 aa).

Carbamoyl phosphate is bound by residues Arg59 and Thr60. Lys87 lines the L-aspartate pocket. Carbamoyl phosphate contacts are provided by Arg109, His139, and Gln142. L-aspartate-binding residues include Arg172 and Arg224. Ala265 and Pro266 together coordinate carbamoyl phosphate.

The protein belongs to the aspartate/ornithine carbamoyltransferase superfamily. ATCase family. Heterododecamer (2C3:3R2) of six catalytic PyrB chains organized as two trimers (C3), and six regulatory PyrI chains organized as three dimers (R2).

It catalyses the reaction carbamoyl phosphate + L-aspartate = N-carbamoyl-L-aspartate + phosphate + H(+). It participates in pyrimidine metabolism; UMP biosynthesis via de novo pathway; (S)-dihydroorotate from bicarbonate: step 2/3. Catalyzes the condensation of carbamoyl phosphate and aspartate to form carbamoyl aspartate and inorganic phosphate, the committed step in the de novo pyrimidine nucleotide biosynthesis pathway. This Streptococcus uberis (strain ATCC BAA-854 / 0140J) protein is Aspartate carbamoyltransferase catalytic subunit.